Consider the following 89-residue polypeptide: Large ribosomal subunit protein eL43 (89 aa).

Zn(2+) is bound by residues Cys-38, Cys-41, Cys-56, and Cys-59. The segment at 38 to 59 (CPVCHKRAVKRVGTGIWRCTKC) adopts a C4-type zinc-finger fold.

It belongs to the eukaryotic ribosomal protein eL43 family. Putative zinc-binding subfamily. As to quaternary structure, part of the 50S ribosomal subunit. Zn(2+) is required as a cofactor.

In terms of biological role, binds to the 23S rRNA. The protein is Large ribosomal subunit protein eL43 of Methanopyrus kandleri (strain AV19 / DSM 6324 / JCM 9639 / NBRC 100938).